The following is a 953-amino-acid chain: Pyruvate, phosphate dikinase, chloroplastic (953 aa).

Residues 1 to 77 (MMSSLSVEGM…VLNPVSPPVT (77 aa)) constitute a chloroplast transit peptide. Positions 55–74 (PELRSSGLTPPRAVLNPVSP) are disordered. Thr-533 bears the Phosphothreonine; by PDRP1 mark. Residue His-535 is the Tele-phosphohistidine intermediate of the active site. Substrate-binding residues include Arg-641, Arg-698, Glu-827, Gly-848, Thr-849, Asn-850, and Asp-851. Glu-827 provides a ligand contact to Mg(2+). Asp-851 lines the Mg(2+) pocket. The active-site Proton donor is the Cys-913.

This sequence belongs to the PEP-utilizing enzyme family. Homotetramer. The cofactor is Mg(2+). Post-translationally, phosphorylation of Thr-533 in the dark inactivates the enzyme. Dephosphorylation upon light stimulation reactivates the enzyme. Isoform 1 mainly localized in mesophyll cells and only a low level is found in bundle sheath cells. Isoform 2 is expressed in roots and stems.

Its subcellular location is the plastid. The protein resides in the chloroplast. The protein localises to the cytoplasm. It catalyses the reaction pyruvate + phosphate + ATP = phosphoenolpyruvate + AMP + diphosphate + H(+). Its pathway is photosynthesis; C4 acid pathway. Activated by light-induced dephosphorylation. Inhibited by dark-induced phosphorylation. Both reactions are catalyzed by PDRP1. Functionally, formation of phosphoenolpyruvate, which is the primary acceptor of CO(2) in C4 and some Crassulacean acid metabolism plants. The protein is Pyruvate, phosphate dikinase, chloroplastic (PPDK) of Flaveria trinervia (Clustered yellowtops).